The following is a 476-amino-acid chain: Monofunctional riboflavin biosynthesis protein RIBA 2, chloroplastic (476 aa).

A chloroplast-targeting transit peptide spans methionine 1–phenylalanine 54. The DHBP synthase stretch occupies residues methionine 44–lysine 306. D-ribulose 5-phosphate contacts are provided by residues arginine 130–glutamate 131, aspartate 135, arginine 245–threonine 249, and glutamate 269. Residue glutamate 131 participates in Mg(2+) binding. Mg(2+) is bound at residue histidine 248. The segment at arginine 307–proline 476 is inactive GTP cyclohydrolase II. GTP contacts are provided by residues arginine 357 to glutamate 361, glutamine 376, glutamate 399 to lysine 401, and threonine 450.

It in the N-terminal section; belongs to the DHBP synthase family. The protein in the C-terminal section; belongs to the GTP cyclohydrolase II family. The cofactor is Mg(2+). Mn(2+) serves as cofactor. As to expression, expressed in leaves, shoots, roots, flowers and siliques.

It is found in the plastid. The protein localises to the chloroplast. The catalysed reaction is D-ribulose 5-phosphate = (2S)-2-hydroxy-3-oxobutyl phosphate + formate + H(+). The protein operates within cofactor biosynthesis; riboflavin biosynthesis; 2-hydroxy-3-oxobutyl phosphate from D-ribulose 5-phosphate: step 1/1. In terms of biological role, involved in riboflavin biosynthesis. Catalyzes the conversion of D-ribulose 5-phosphate to formate and 3,4-dihydroxy-2-butanone 4-phosphate. RIBA2 and RIBA3 together are not able to complement the loss of function of RIBA1. This chain is Monofunctional riboflavin biosynthesis protein RIBA 2, chloroplastic (RIBA2), found in Arabidopsis thaliana (Mouse-ear cress).